The primary structure comprises 426 residues: Adenylosuccinate synthetase (426 aa).

Residues 12–18 (GDEGKGK) and 40–42 (GHT) contribute to the GTP site. Residue Asp13 is the Proton acceptor of the active site. Mg(2+) is bound by residues Asp13 and Gly40. IMP contacts are provided by residues 13-16 (DEGK), 38-41 (NAGH), Thr131, Arg145, Gln226, Thr241, and Arg305. Catalysis depends on His41, which acts as the Proton donor. Residue 301–307 (ATTGRKR) coordinates substrate. Residues Arg307, 333 to 335 (KLD), and 415 to 417 (SVG) each bind GTP.

Belongs to the adenylosuccinate synthetase family. As to quaternary structure, homodimer. Mg(2+) serves as cofactor.

It localises to the cytoplasm. The catalysed reaction is IMP + L-aspartate + GTP = N(6)-(1,2-dicarboxyethyl)-AMP + GDP + phosphate + 2 H(+). It functions in the pathway purine metabolism; AMP biosynthesis via de novo pathway; AMP from IMP: step 1/2. In terms of biological role, plays an important role in the de novo pathway of purine nucleotide biosynthesis. Catalyzes the first committed step in the biosynthesis of AMP from IMP. In Nitratidesulfovibrio vulgaris (strain ATCC 29579 / DSM 644 / CCUG 34227 / NCIMB 8303 / VKM B-1760 / Hildenborough) (Desulfovibrio vulgaris), this protein is Adenylosuccinate synthetase.